The chain runs to 600 residues: Calcium/calmodulin-dependent serine/threonine-protein kinase 1 (600 aa).

Positions 1 to 99 are disordered; it reads MGLCHGKSAA…GGFKRPFPPP (99 aa). The span at 24–56 shows a compositional bias: low complexity; it reads TRVAEAAAAPAKPASPAPSAAAAAAAPAKPGTP. A compositionally biased stretch (polar residues) spans 74–85; that stretch reads YKGSPANSSVAS. In terms of domain architecture, Protein kinase spans 147-409; sequence YELGREVGRG…AAQALCHPWI (263 aa). Residues 153–161 and Lys-179 each bind ATP; that span reads VGRGHFGYT. The active-site Proton acceptor is the Asp-275.

It belongs to the protein kinase superfamily. Ser/Thr protein kinase family. Post-translationally, autophosphorylated. Highly expressed in roots in the zone of cell division. Expressed in leaf mesophyll cells and at lower levels in mature stems.

It catalyses the reaction L-seryl-[protein] + ATP = O-phospho-L-seryl-[protein] + ADP + H(+). The catalysed reaction is L-threonyl-[protein] + ATP = O-phospho-L-threonyl-[protein] + ADP + H(+). With respect to regulation, activated by the binding of calmodulin-like protein 1 (CML1) in the presence of Ca(2+). Functionally, possesses kinase activity in vitro. The polypeptide is Calcium/calmodulin-dependent serine/threonine-protein kinase 1 (CAMK1) (Oryza sativa subsp. japonica (Rice)).